The chain runs to 281 residues: Energy-coupling factor transporter ATP-binding protein EcfA1 (281 aa).

The region spanning 7–242 (ISVEDIVFRY…NKELVRIGLD (236 aa)) is the ABC transporter domain. An ATP-binding site is contributed by 42–49 (GHNGSGKS). Glu-168 acts as the Proton acceptor in catalysis.

This sequence belongs to the ABC transporter superfamily. Energy-coupling factor EcfA family. Forms a stable energy-coupling factor (ECF) transporter complex composed of 2 membrane-embedded substrate-binding proteins (S component), 2 ATP-binding proteins (A component) and 2 transmembrane proteins (T component).

Its subcellular location is the cell membrane. Functionally, ATP-binding (A) component of a common energy-coupling factor (ECF) ABC-transporter complex. Unlike classic ABC transporters this ECF transporter provides the energy necessary to transport a number of different substrates. This chain is Energy-coupling factor transporter ATP-binding protein EcfA1, found in Bacillus subtilis (strain 168).